The sequence spans 364 residues: UDP-N-acetylglucosamine--N-acetylmuramyl-(pentapeptide) pyrophosphoryl-undecaprenol N-acetylglucosamine transferase (364 aa).

Residues 10–12 (TGG), Asn123, Ser198, Ile251, and Gln296 contribute to the UDP-N-acetyl-alpha-D-glucosamine site.

The protein belongs to the glycosyltransferase 28 family. MurG subfamily.

It is found in the cell membrane. The enzyme catalyses di-trans,octa-cis-undecaprenyl diphospho-N-acetyl-alpha-D-muramoyl-L-alanyl-D-glutamyl-meso-2,6-diaminopimeloyl-D-alanyl-D-alanine + UDP-N-acetyl-alpha-D-glucosamine = di-trans,octa-cis-undecaprenyl diphospho-[N-acetyl-alpha-D-glucosaminyl-(1-&gt;4)]-N-acetyl-alpha-D-muramoyl-L-alanyl-D-glutamyl-meso-2,6-diaminopimeloyl-D-alanyl-D-alanine + UDP + H(+). The protein operates within cell wall biogenesis; peptidoglycan biosynthesis. Its function is as follows. Cell wall formation. Catalyzes the transfer of a GlcNAc subunit on undecaprenyl-pyrophosphoryl-MurNAc-pentapeptide (lipid intermediate I) to form undecaprenyl-pyrophosphoryl-MurNAc-(pentapeptide)GlcNAc (lipid intermediate II). This chain is UDP-N-acetylglucosamine--N-acetylmuramyl-(pentapeptide) pyrophosphoryl-undecaprenol N-acetylglucosamine transferase, found in Exiguobacterium sibiricum (strain DSM 17290 / CCUG 55495 / CIP 109462 / JCM 13490 / 255-15).